The primary structure comprises 456 residues: 3-isopropylmalate dehydratase large subunit (456 aa).

3 residues coordinate [4Fe-4S] cluster: Cys336, Cys396, and Cys399.

The protein belongs to the aconitase/IPM isomerase family. LeuC type 1 subfamily. As to quaternary structure, heterodimer of LeuC and LeuD. [4Fe-4S] cluster serves as cofactor.

It catalyses the reaction (2R,3S)-3-isopropylmalate = (2S)-2-isopropylmalate. It functions in the pathway amino-acid biosynthesis; L-leucine biosynthesis; L-leucine from 3-methyl-2-oxobutanoate: step 2/4. Its function is as follows. Catalyzes the isomerization between 2-isopropylmalate and 3-isopropylmalate, via the formation of 2-isopropylmaleate. This is 3-isopropylmalate dehydratase large subunit from Staphylococcus saprophyticus subsp. saprophyticus (strain ATCC 15305 / DSM 20229 / NCIMB 8711 / NCTC 7292 / S-41).